We begin with the raw amino-acid sequence, 127 residues long: Aspartate 1-decarboxylase (127 aa).

S25 acts as the Schiff-base intermediate with substrate; via pyruvic acid in catalysis. S25 carries the post-translational modification Pyruvic acid (Ser). T57 contacts substrate. Catalysis depends on Y58, which acts as the Proton donor. 73-75 (GAA) lines the substrate pocket.

It belongs to the PanD family. Heterooctamer of four alpha and four beta subunits. The cofactor is pyruvate. In terms of processing, is synthesized initially as an inactive proenzyme, which is activated by self-cleavage at a specific serine bond to produce a beta-subunit with a hydroxyl group at its C-terminus and an alpha-subunit with a pyruvoyl group at its N-terminus.

The protein resides in the cytoplasm. It catalyses the reaction L-aspartate + H(+) = beta-alanine + CO2. It functions in the pathway cofactor biosynthesis; (R)-pantothenate biosynthesis; beta-alanine from L-aspartate: step 1/1. Catalyzes the pyruvoyl-dependent decarboxylation of aspartate to produce beta-alanine. The protein is Aspartate 1-decarboxylase of Desulfitobacterium hafniense (strain DSM 10664 / DCB-2).